A 228-amino-acid polypeptide reads, in one-letter code: uncharacterized protein (228 aa).

Residues 194-228 are disordered; sequence SRRADEHPAPSTEPHAAAVAPEPDFMAEPIPALEE.

This is an uncharacterized protein from Treponema pallidum (strain Nichols).